We begin with the raw amino-acid sequence, 221 residues long: Penicillin-binding protein activator LpoB (221 aa).

The first 20 residues, 1 to 20 (MLNRMYRYALLATVALALSG), serve as a signal peptide directing secretion. Cysteine 21 carries the N-palmitoyl cysteine lipid modification. The S-diacylglycerol cysteine moiety is linked to residue cysteine 21. The disordered stretch occupies residues 29 to 82 (PAPVEEAQPGTQQPTQPVPPPTQPVPTVPSVPSIPAQPGPIEHQPENATPEPKA). The segment covering 44 to 57 (QPVPPPTQPVPTVP) has biased composition (pro residues).

It belongs to the LpoB family. In terms of assembly, interacts with PBP1b.

The protein localises to the cell outer membrane. In terms of biological role, regulator of peptidoglycan synthesis that is essential for the function of penicillin-binding protein 1B (PBP1b). The polypeptide is Penicillin-binding protein activator LpoB (Cronobacter turicensis (strain DSM 18703 / CCUG 55852 / LMG 23827 / z3032)).